The primary structure comprises 110 residues: Cell cycle protein GpsB (110 aa).

Residues 37 to 63 (KDYTVYIALVKELQEENAKLKAKATSA) are a coiled coil. The interval 59 to 79 (KATSAPASRPAYASATSEPSH) is disordered. A compositionally biased stretch (low complexity) spans 60-75 (ATSAPASRPAYASATS).

Belongs to the GpsB family. In terms of assembly, forms polymers through the coiled coil domains. Interacts with PBP1, MreC and EzrA.

The protein resides in the cytoplasm. Its function is as follows. Divisome component that associates with the complex late in its assembly, after the Z-ring is formed, and is dependent on DivIC and PBP2B for its recruitment to the divisome. Together with EzrA, is a key component of the system that regulates PBP1 localization during cell cycle progression. Its main role could be the removal of PBP1 from the cell pole after pole maturation is completed. Also contributes to the recruitment of PBP1 to the division complex. Not essential for septum formation. The polypeptide is Cell cycle protein GpsB (Streptococcus thermophilus (strain CNRZ 1066)).